The sequence spans 122 residues: Large ribosomal subunit protein uL14c (122 aa).

It belongs to the universal ribosomal protein uL14 family. Part of the 50S ribosomal subunit.

The protein resides in the plastid. The protein localises to the chloroplast. Functionally, binds to 23S rRNA. This Chaetosphaeridium globosum (Charophycean green alga) protein is Large ribosomal subunit protein uL14c.